The sequence spans 345 residues: Tyrosine--tRNA ligase (345 aa).

Residue Tyr-36 coordinates L-tyrosine. The 'HIGH' region signature appears at 41–49 (PTGEMHIGH). The L-tyrosine site is built by Tyr-163, Gln-167, Asp-170, and Gln-185.

This sequence belongs to the class-I aminoacyl-tRNA synthetase family. TyrS type 3 subfamily. Homodimer.

The protein localises to the cytoplasm. It carries out the reaction tRNA(Tyr) + L-tyrosine + ATP = L-tyrosyl-tRNA(Tyr) + AMP + diphosphate + H(+). Its function is as follows. Catalyzes the attachment of tyrosine to tRNA(Tyr) in a two-step reaction: tyrosine is first activated by ATP to form Tyr-AMP and then transferred to the acceptor end of tRNA(Tyr). The chain is Tyrosine--tRNA ligase from Natronomonas pharaonis (strain ATCC 35678 / DSM 2160 / CIP 103997 / JCM 8858 / NBRC 14720 / NCIMB 2260 / Gabara) (Halobacterium pharaonis).